A 105-amino-acid chain; its full sequence is Small ribosomal subunit protein uS10 (105 aa).

It belongs to the universal ribosomal protein uS10 family. In terms of assembly, part of the 30S ribosomal subunit.

Functionally, involved in the binding of tRNA to the ribosomes. The sequence is that of Small ribosomal subunit protein uS10 from Legionella pneumophila (strain Paris).